Reading from the N-terminus, the 153-residue chain is Ribosomal RNA large subunit methyltransferase H (153 aa).

S-adenosyl-L-methionine is bound by residues Ile-75, Gly-103, and 121–126 (LSAMTF).

Belongs to the RNA methyltransferase RlmH family. Homodimer.

It localises to the cytoplasm. It catalyses the reaction pseudouridine(1915) in 23S rRNA + S-adenosyl-L-methionine = N(3)-methylpseudouridine(1915) in 23S rRNA + S-adenosyl-L-homocysteine + H(+). Its function is as follows. Specifically methylates the pseudouridine at position 1915 (m3Psi1915) in 23S rRNA. The chain is Ribosomal RNA large subunit methyltransferase H from Helicobacter hepaticus (strain ATCC 51449 / 3B1).